We begin with the raw amino-acid sequence, 447 residues long: Tubulin beta chain (447 aa).

GTP-binding residues include glutamine 11, glutamate 69, serine 138, glycine 142, threonine 143, glycine 144, asparagine 204, and asparagine 226. Residue glutamate 69 coordinates Mg(2+). Positions 424 to 447 are disordered; sequence QYQDASISEGEEDYEEEPQVENEE. Acidic residues predominate over residues 432-447; the sequence is EGEEDYEEEPQVENEE.

It belongs to the tubulin family. In terms of assembly, dimer of alpha and beta chains. A typical microtubule is a hollow water-filled tube with an outer diameter of 25 nm and an inner diameter of 15 nM. Alpha-beta heterodimers associate head-to-tail to form protofilaments running lengthwise along the microtubule wall with the beta-tubulin subunit facing the microtubule plus end conferring a structural polarity. Microtubules usually have 13 protofilaments but different protofilament numbers can be found in some organisms and specialized cells. Requires Mg(2+) as cofactor.

The protein localises to the cytoplasm. It localises to the cytoskeleton. Functionally, tubulin is the major constituent of microtubules, a cylinder consisting of laterally associated linear protofilaments composed of alpha- and beta-tubulin heterodimers. Microtubules grow by the addition of GTP-tubulin dimers to the microtubule end, where a stabilizing cap forms. Below the cap, tubulin dimers are in GDP-bound state, owing to GTPase activity of alpha-tubulin. This Uncinula necator (Grape powdery mildew) protein is Tubulin beta chain.